Consider the following 137-residue polypeptide: MLQPKRTKFRKVMKGRNRGLAQRGSKVSFGTIGLQATGRGRITARQIEAARRAMTRHIKRGGKIWIRVFPDKPITNKPLEVRMGKGKGSVEYWVAQIQPGKMLYEMEGVSEDVAREAFRLAAAKLPVSTRVVTRTVM.

Belongs to the universal ribosomal protein uL16 family. In terms of assembly, part of the 50S ribosomal subunit.

In terms of biological role, binds 23S rRNA and is also seen to make contacts with the A and possibly P site tRNAs. This chain is Large ribosomal subunit protein uL16, found in Alcanivorax borkumensis (strain ATCC 700651 / DSM 11573 / NCIMB 13689 / SK2).